The chain runs to 307 residues: Furaquinocin biosynthesis prenyltransferase (307 aa).

Belongs to the aromatic prenyltransferase family. As to quaternary structure, monomer.

It carries out the reaction 2-O,3-dimethylflaviolin + (2E)-geranyl diphosphate = 6-linalyl-2-O,3-dimethylflaviolin + diphosphate. It catalyses the reaction 2-O,3-dimethylflaviolin + (2E)-geranyl diphosphate + H(+) = 7-O-geranyl-2-O,3-dimethylflaviolin + diphosphate. Does not require any metal cations for activity. In terms of biological role, involved in the biosynthesis of furaquinocin. Catalyzes the transfer of a geranyl group to 2-methoxy-3-methyl-flaviolin to yield 6-prenyl-2-methoxy-3-methyl-flaviolin and 7-O-geranyl-2-methoxy-3-methyl-flaviolin in a 10:1 ratio. Can also use other substrates such as flaviolin or 1,3-dihydroxy naphthalene, and can also use DMAPP as prenyl donor. This Streptomyces sp. (strain KO-3988) protein is Furaquinocin biosynthesis prenyltransferase.